A 253-amino-acid chain; its full sequence is uncharacterized protein (253 aa).

This sequence belongs to the NAD(P)-dependent epimerase/dehydratase family.

This is an uncharacterized protein from Bacillus subtilis (strain 168).